Consider the following 404-residue polypeptide: Cysteine desulfurase IscS (404 aa).

Residues Ala75–Thr76, Asn155, Gln183, and Ser203–His205 contribute to the pyridoxal 5'-phosphate site. Lys206 bears the N6-(pyridoxal phosphate)lysine mark. Position 243 (Thr243) interacts with pyridoxal 5'-phosphate. Cys328 serves as the catalytic Cysteine persulfide intermediate. Cys328 contributes to the [2Fe-2S] cluster binding site.

Belongs to the class-V pyridoxal-phosphate-dependent aminotransferase family. NifS/IscS subfamily. In terms of assembly, homodimer. Forms a heterotetramer with IscU, interacts with other sulfur acceptors. It depends on pyridoxal 5'-phosphate as a cofactor.

The protein localises to the cytoplasm. It catalyses the reaction (sulfur carrier)-H + L-cysteine = (sulfur carrier)-SH + L-alanine. The protein operates within cofactor biosynthesis; iron-sulfur cluster biosynthesis. In terms of biological role, master enzyme that delivers sulfur to a number of partners involved in Fe-S cluster assembly, tRNA modification or cofactor biosynthesis. Catalyzes the removal of elemental sulfur atoms from cysteine to produce alanine. Functions as a sulfur delivery protein for Fe-S cluster synthesis onto IscU, an Fe-S scaffold assembly protein, as well as other S acceptor proteins. This chain is Cysteine desulfurase IscS, found in Shewanella piezotolerans (strain WP3 / JCM 13877).